We begin with the raw amino-acid sequence, 167 residues long: SAR-endolysin (167 aa).

The helical; Signal-anchor for type II membrane protein transmembrane segment at 10–32 threads the bilayer; sequence SVMAAISGGAIAIASVLITGPGG. Residues E37 and D46 each act as proton donor/acceptor in the active site.

Belongs to the glycosyl hydrolase 24 family.

It is found in the host cell inner membrane. It carries out the reaction Hydrolysis of (1-&gt;4)-beta-linkages between N-acetylmuramic acid and N-acetyl-D-glucosamine residues in a peptidoglycan and between N-acetyl-D-glucosamine residues in chitodextrins.. Functionally, signal-arrest-release (SAR) endolysin with lysozyme activity that degrades host peptidoglycans and participates with the pinholin and spanin proteins in the sequential events which lead to programmed host cell lysis releasing the mature viral particles. Once the pinholin has permeabilized the host cell membrane, the SAR-endolysin is released into the periplasm where it breaks down the peptidoglycan layer. In Bacteriophage PS119, this protein is SAR-endolysin (19).